We begin with the raw amino-acid sequence, 149 residues long: Calmodulin-2 (149 aa).

EF-hand domains are found at residues 8 to 43 (DQISEFKEAFSLFDKDGDGCITTKELGTVMRSLGQN), 44 to 79 (PTEAELQDMINEVDADGNGTIDFPEFLNLMARKMKD), 81 to 116 (DSEEELKEAFRVFDKDQNGFISAAELRHVMTNLGEK), and 117 to 149 (LTDEEVDEMIKEADVDGDGQINYEEFVKVMMAK). Positions 21, 23, 25, 27, 32, 57, 59, 61, 63, 68, 94, 96, 98, 105, 130, 132, 134, 136, and 141 each coordinate Ca(2+).

It belongs to the calmodulin family. As to quaternary structure, interacts with KCBP and CIP111. Binds to IQD1 and IQD20.

It is found in the cytoplasm. The protein localises to the cytoskeleton. Functionally, calmodulin mediates the control of a large number of enzymes, ion channels and other proteins by Ca(2+). Among the enzymes to be stimulated by the calmodulin-Ca(2+) complex are a number of protein kinases and phosphatases. This chain is Calmodulin-2 (CAM2), found in Arabidopsis thaliana (Mouse-ear cress).